The following is a 127-amino-acid chain: Protein ApaG (127 aa).

The 125-residue stretch at 3 to 127 (DTNKYRIEVQ…FVLASPRALH (125 aa)) folds into the ApaG domain.

In Dechloromonas aromatica (strain RCB), this protein is Protein ApaG.